The primary structure comprises 163 residues: NADH-quinone oxidoreductase subunit I (163 aa).

4Fe-4S ferredoxin-type domains are found at residues 53 to 83 and 94 to 123; these read LRRYPNGEERCIACKLCEAICPAQAITIEAG and VRYDIDMVKCIYCGFCQEACPVDAIVEGPN. Cys63, Cys66, Cys69, Cys73, Cys103, Cys106, Cys109, and Cys113 together coordinate [4Fe-4S] cluster.

Belongs to the complex I 23 kDa subunit family. NDH-1 is composed of 14 different subunits. Subunits NuoA, H, J, K, L, M, N constitute the membrane sector of the complex. [4Fe-4S] cluster serves as cofactor.

The protein localises to the cell inner membrane. The catalysed reaction is a quinone + NADH + 5 H(+)(in) = a quinol + NAD(+) + 4 H(+)(out). NDH-1 shuttles electrons from NADH, via FMN and iron-sulfur (Fe-S) centers, to quinones in the respiratory chain. The immediate electron acceptor for the enzyme in this species is believed to be ubiquinone. Couples the redox reaction to proton translocation (for every two electrons transferred, four hydrogen ions are translocated across the cytoplasmic membrane), and thus conserves the redox energy in a proton gradient. The chain is NADH-quinone oxidoreductase subunit I from Brucella canis (strain ATCC 23365 / NCTC 10854 / RM-666).